A 390-amino-acid polypeptide reads, in one-letter code: Cell adhesion molecule 4 (390 aa).

Positions 1–27 (MAPALTALNRCFVLGILLLVTAGTAFS) are cleaved as a signal peptide. Residues 28-122 (QEVQAENVTV…DTHHQIATLT (95 aa)) form the Ig-like V-type domain. At 28-326 (QEVQAENVTV…IEAQTQVPYA (299 aa)) the chain is on the extracellular side. N-linked (GlcNAc...) asparagine glycans are attached at residues asparagine 34 and asparagine 70. 3 cysteine pairs are disulfide-bonded: cysteine 47–cysteine 107, cysteine 148–cysteine 202, and cysteine 247–cysteine 293. 2 consecutive Ig-like C2-type domains span residues 127-219 (PDNP…TQYE) and 226-309 (PTAS…YVLV). N-linked (GlcNAc...) asparagine glycans are attached at residues asparagine 264 and asparagine 288. Residues 327 to 347 (VIGGILALLVFLVICILIVMV) traverse the membrane as a helical segment. Over 348-390 (WCSVRQKGSYLTHEASGLDEHGEAREAFLNGGENHKRKEEFFI) the chain is Cytoplasmic.

This sequence belongs to the nectin family.

The protein resides in the membrane. Involved in the cell-cell adhesion. This is Cell adhesion molecule 4 (cadm4) from Xenopus laevis (African clawed frog).